The following is a 262-amino-acid chain: Thiazole synthase (262 aa).

The active-site Schiff-base intermediate with DXP is the lysine 97. Residues glycine 158, 185–186 (AG), and 207–208 (NT) contribute to the 1-deoxy-D-xylulose 5-phosphate site. Residues 243–262 (DKAQASTPTVGQPFWHSAEY) are disordered.

The protein belongs to the ThiG family. Homotetramer. Forms heterodimers with either ThiH or ThiS.

Its subcellular location is the cytoplasm. It carries out the reaction [ThiS sulfur-carrier protein]-C-terminal-Gly-aminoethanethioate + 2-iminoacetate + 1-deoxy-D-xylulose 5-phosphate = [ThiS sulfur-carrier protein]-C-terminal Gly-Gly + 2-[(2R,5Z)-2-carboxy-4-methylthiazol-5(2H)-ylidene]ethyl phosphate + 2 H2O + H(+). The protein operates within cofactor biosynthesis; thiamine diphosphate biosynthesis. Its function is as follows. Catalyzes the rearrangement of 1-deoxy-D-xylulose 5-phosphate (DXP) to produce the thiazole phosphate moiety of thiamine. Sulfur is provided by the thiocarboxylate moiety of the carrier protein ThiS. In vitro, sulfur can be provided by H(2)S. The sequence is that of Thiazole synthase from Neisseria meningitidis serogroup C (strain 053442).